Reading from the N-terminus, the 324-residue chain is MKPSVILYKSLPDDLLARLESHFNVTRVPDLSPETIEAHASAFSEAQGLLGSSEKVDAALLEKMPALRAASTVSVGYDNFDVDALSAKKIALMHTPTVLTETVADTLMTLVLTTARRALEVAERVKAGEWTGSIGPDWFGCDVHHKTLGIVGMGRIGLALAQRAHFGFNMPILYNARRHHSEAEERFNARYCDLDTLLAESDFVCVILPLTDETHHMIGAEQFRKMKKSAIFINAGRGPVVDENALIAALQSGEIHAAGLDVFEQEPLSKDSPLLTMKNVVALPHIGSATHETRYNMAACAVDNLINALNGDVSQNCVNPKAVK.

Active-site residues include R237 and E266. The active-site Proton donor is the H285.

The protein belongs to the D-isomer specific 2-hydroxyacid dehydrogenase family. GhrB subfamily. In terms of assembly, homodimer.

Its subcellular location is the cytoplasm. It carries out the reaction glycolate + NADP(+) = glyoxylate + NADPH + H(+). The catalysed reaction is (R)-glycerate + NAD(+) = 3-hydroxypyruvate + NADH + H(+). The enzyme catalyses (R)-glycerate + NADP(+) = 3-hydroxypyruvate + NADPH + H(+). Catalyzes the NADPH-dependent reduction of glyoxylate and hydroxypyruvate into glycolate and glycerate, respectively. This is Glyoxylate/hydroxypyruvate reductase B from Cronobacter sakazakii (strain ATCC BAA-894) (Enterobacter sakazakii).